A 309-amino-acid polypeptide reads, in one-letter code: ATP synthase gamma chain (309 aa).

It belongs to the ATPase gamma chain family. As to quaternary structure, F-type ATPases have 2 components, CF(1) - the catalytic core - and CF(0) - the membrane proton channel. CF(1) has five subunits: alpha(3), beta(3), gamma(1), delta(1), epsilon(1). CF(0) has three main subunits: a, b and c.

Its subcellular location is the cell membrane. Functionally, produces ATP from ADP in the presence of a proton gradient across the membrane. The gamma chain is believed to be important in regulating ATPase activity and the flow of protons through the CF(0) complex. The protein is ATP synthase gamma chain of Mycolicibacterium vanbaalenii (strain DSM 7251 / JCM 13017 / BCRC 16820 / KCTC 9966 / NRRL B-24157 / PYR-1) (Mycobacterium vanbaalenii).